Here is a 189-residue protein sequence, read N- to C-terminus: Tumor protein p53-inducible protein 11 (189 aa).

Over 1–63 (MAGKQPPPLM…FAVREPLGLR (63 aa)) the chain is Cytoplasmic. Position 14 is a phosphoserine (serine 14). The chain crosses the membrane as a helical span at residues 64–84 (VWQFLSAMLFSSVAIMALALP). The Extracellular segment spans residues 85–108 (DQLYDAVFDGAEVTSKTPIRLYGG). The helical transmembrane segment at 109-129 (ALLSISLIMWNALYTAEKVII) threads the bilayer. Arginine 130 is a topological domain (cytoplasmic). Residues 131–151 (WTLLTEACYFGVQSLVVTATL) form a helical membrane-spanning segment. Residues 152-155 (AETG) are Extracellular-facing. A helical membrane pass occupies residues 156 to 176 (LMSLGTVLLLASRLLFVIVSI). Residues 177–189 (YYYYQVGRKPKKV) lie on the Cytoplasmic side of the membrane.

The protein resides in the membrane. This Mus musculus (Mouse) protein is Tumor protein p53-inducible protein 11 (Trp53i11).